A 162-amino-acid chain; its full sequence is D-aminoacyl-tRNA deacylase (162 aa).

The Gly-cisPro motif, important for rejection of L-amino acids signature appears at 143–144 (GP).

The protein belongs to the DTD family. As to quaternary structure, homodimer.

Its subcellular location is the cytoplasm. It catalyses the reaction glycyl-tRNA(Ala) + H2O = tRNA(Ala) + glycine + H(+). The enzyme catalyses a D-aminoacyl-tRNA + H2O = a tRNA + a D-alpha-amino acid + H(+). In terms of biological role, an aminoacyl-tRNA editing enzyme that deacylates mischarged D-aminoacyl-tRNAs. Also deacylates mischarged glycyl-tRNA(Ala), protecting cells against glycine mischarging by AlaRS. Acts via tRNA-based rather than protein-based catalysis; rejects L-amino acids rather than detecting D-amino acids in the active site. By recycling D-aminoacyl-tRNA to D-amino acids and free tRNA molecules, this enzyme counteracts the toxicity associated with the formation of D-aminoacyl-tRNA entities in vivo and helps enforce protein L-homochirality. The protein is D-aminoacyl-tRNA deacylase of Nitratidesulfovibrio vulgaris (strain ATCC 29579 / DSM 644 / CCUG 34227 / NCIMB 8303 / VKM B-1760 / Hildenborough) (Desulfovibrio vulgaris).